Consider the following 130-residue polypeptide: Small ribosomal subunit protein uS11 (130 aa).

This sequence belongs to the universal ribosomal protein uS11 family. Part of the 30S ribosomal subunit. Interacts with proteins S7 and S18. Binds to IF-3.

In terms of biological role, located on the platform of the 30S subunit, it bridges several disparate RNA helices of the 16S rRNA. Forms part of the Shine-Dalgarno cleft in the 70S ribosome. The sequence is that of Small ribosomal subunit protein uS11 from Campylobacter fetus subsp. fetus (strain 82-40).